The following is a 150-amino-acid chain: Deoxyuridine 5'-triphosphate nucleotidohydrolase (150 aa).

Substrate contacts are provided by residues 65 to 67 (RSG), asparagine 78, and 82 to 84 (TID). The interval 130–150 (LSDTERGEGGFGHTGVASKAE) is disordered.

It belongs to the dUTPase family. It depends on Mg(2+) as a cofactor.

The catalysed reaction is dUTP + H2O = dUMP + diphosphate + H(+). The protein operates within pyrimidine metabolism; dUMP biosynthesis; dUMP from dCTP (dUTP route): step 2/2. In terms of biological role, this enzyme is involved in nucleotide metabolism: it produces dUMP, the immediate precursor of thymidine nucleotides and it decreases the intracellular concentration of dUTP so that uracil cannot be incorporated into DNA. The polypeptide is Deoxyuridine 5'-triphosphate nucleotidohydrolase (Chlorobaculum parvum (strain DSM 263 / NCIMB 8327) (Chlorobium vibrioforme subsp. thiosulfatophilum)).